The sequence spans 181 residues: Protein Syd (181 aa).

The protein belongs to the Syd family.

The protein resides in the cell inner membrane. Functionally, interacts with the SecY protein in vivo. May bind preferentially to an uncomplexed state of SecY, thus functioning either as a chelating agent for excess SecY in the cell or as a regulatory factor that negatively controls the translocase function. The protein is Protein Syd of Escherichia coli O81 (strain ED1a).